A 150-amino-acid chain; its full sequence is PTTG1IP family member 2 (150 aa).

The first 19 residues, 1 to 19 (MCWLRAWSHILLPVFLSVA), serve as a signal peptide directing secretion. Over 20–98 (LIQLIFNLSD…SIFWANCNVD (79 aa)) the chain is Extracellular. N26 is a glycosylation site (N-linked (GlcNAc...) asparagine). A helical transmembrane segment spans residues 99–119 (LFGIVMLILIVILALAFLWYC). Residues 120–150 (LAYYFYMQQHMALYARHGQVPVYNWDAPGDW) lie on the Cytoplasmic side of the membrane.

It is found in the membrane. The protein is PTTG1IP family member 2 of Mus musculus (Mouse).